We begin with the raw amino-acid sequence, 585 residues long: MKWIKKGTFSGKQYRDDVSRKISWGHWFAFFNIIVAIFIGARYAFIIDWPDTLAGKLYFFVSLLGHFSFNVFALYLLVVFPLSFIVKNHRTFRGLTVIFSTICTTLLLFDTAVFNRFNLHLSSVVWNLLVNPENGEMSRDWQIFFAPMPIILLAQMLFSRWSWEKLRSLERQKWLKGTGIFLTTTFIATHLIYAWADAYLYRPITMQRSNFPLSYPMTARSFLEKHGFLDGEEYTQKLAQEGRLDALKIDYPKKELTYAPITHKPNILLVTVSGLRHDAISNEKMPKLAKFATSSTEFTNHYSTGNSNNAGLIGLFYGLNANYTDSILSNHTQSVLIEKLRAENYQLGLFSATNFKDSIFRQALFREIKLSSNKTNKPNNESAVKNLNDFIKAQKTDSPWFAYLDLALEAKNPSDYDRTLQDIDSLLAKALESTPLENTLVIITSEHGLTFNEMNQKERENYFGRDEIQVPLLVYWKDLPVGKQNGLSNHADIFSALMQTVFRVENPLMDYSQGRNLFDLKGDDWVLASNFRWNVVIQPDGTQYHIDRKGNYKKFDKDYIEQSSDRPPLGIFLEAFQLQNFFFEK.

It to E.coli YejM.

This is an uncharacterized protein from Haemophilus influenzae (strain ATCC 51907 / DSM 11121 / KW20 / Rd).